A 125-amino-acid polypeptide reads, in one-letter code: Small ribosomal subunit protein uS12c (125 aa).

This sequence belongs to the universal ribosomal protein uS12 family. In terms of assembly, part of the 30S ribosomal subunit.

It localises to the plastid. The protein localises to the chloroplast. Functionally, with S4 and S5 plays an important role in translational accuracy. Located at the interface of the 30S and 50S subunits. The polypeptide is Small ribosomal subunit protein uS12c (rps12) (Oltmannsiellopsis viridis (Marine flagellate)).